The primary structure comprises 415 residues: MRIISWDVGVIYLAYCVLEYVLSKNKEVIINIIDWNIINLMENNRLVINCCGMKKGNTICDKKASYCLRTPDKKLFGYCKTHLTQYNINWSIQDTEKMFTKISKPDNTCTFLKKTGDFCGKKATYKYKNNKSTNYYCNVHYKSELKNRTKEFSPQPIKNTIVKKYPTAQLQYNLIKKLDKLSKHFAMLGIERVVIENQPSQKNPKMKSIASTLFDYFLIRGFCDKIHNIDIKLVRYMCPSNKLKVNKDNTLEVFKANKDSKKKYKLTKALGIQYTKQLLNNEQEQLDYLSLFEKKDDLCDAYLQGRYYLEFIMDKTDKNYPIIKCQENKFNKPNNDDLQNESGDDSETESSLSWENIKIEISDDQADYYAKKYNKSVMNKSNKLMMNKSMMNKSESNKKSNRKSNKRSNKNIITL.

2 disordered regions span residues 329–351 and 388–415; these read KFNKPNNDDLQNESGDDSETESS and KSMMNKSESNKKSNRKSNKRSNKNIITL. Positions 338-348 are enriched in acidic residues; that stretch reads LQNESGDDSET. Over residues 399–409 the composition is skewed to basic residues; sequence KSNRKSNKRSN.

This is an uncharacterized protein from Acanthamoeba polyphaga mimivirus (APMV).